A 238-amino-acid chain; its full sequence is Ribonuclease PH (238 aa).

Residues R86 and 124 to 126 contribute to the phosphate site; that span reads GTR.

It belongs to the RNase PH family. As to quaternary structure, homohexameric ring arranged as a trimer of dimers.

The enzyme catalyses tRNA(n+1) + phosphate = tRNA(n) + a ribonucleoside 5'-diphosphate. Functionally, phosphorolytic 3'-5' exoribonuclease that plays an important role in tRNA 3'-end maturation. Removes nucleotide residues following the 3'-CCA terminus of tRNAs; can also add nucleotides to the ends of RNA molecules by using nucleoside diphosphates as substrates, but this may not be physiologically important. Probably plays a role in initiation of 16S rRNA degradation (leading to ribosome degradation) during starvation. In Actinobacillus pleuropneumoniae serotype 7 (strain AP76), this protein is Ribonuclease PH.